The following is a 474-amino-acid chain: Equilibrative nucleoside transporter 3 (474 aa).

The Cytoplasmic portion of the chain corresponds to 1 to 53 (MAIISEDDFRHTSNSTYRTASSSLRADQEALLEKLLDRPPPSLQRPEDRFNGT). Phosphoserine occurs at positions 21 and 23. The Dileucine internalization motif signature appears at 31 to 32 (LL). A helical membrane pass occupies residues 54–74 (YIIFFSLGIGGLLPWNFFVTA). At 75 to 105 (QEYWIFKLSNCSSPAAGEEPKDSDILNYFES) the chain is on the extracellular side. N-linked (GlcNAc...) asparagine glycosylation occurs at N84. Residues 106–126 (YLAVASTVPSVLCLALNFLLV) form a helical membrane-spanning segment. Topologically, residues 127-134 (NRVPIRVR) are cytoplasmic. A helical membrane pass occupies residues 135 to 155 (VLASLTVMLAIFIVMTVLVKV). The Extracellular portion of the chain corresponds to 156–161 (DTSSWT). Residues 162–182 (HSFFTITITCMAILSGTSTIF) form a helical membrane-spanning segment. Residues 183 to 201 (NSSVFGMTGSFPMRNSQAL) are Cytoplasmic-facing. Residues 202-222 (ISGGAMGGTLSAVASLVDLAV) traverse the membrane as a helical segment. Residues 223 to 230 (ASDVTDST) lie on the Extracellular side of the membrane. A helical membrane pass occupies residues 231–251 (LAFFLTADIFLALCIGLYLLL). Residues 252–305 (PRLDYARYYMKPVWPTVFSGEEQLPQDSPSPTSVAPGSSDPQTPPLGPILKKTT) lie on the Cytoplasmic side of the membrane. Residues 272–294 (EEQLPQDSPSPTSVAPGSSDPQT) form a disordered region. Over residues 276-292 (PQDSPSPTSVAPGSSDP) the composition is skewed to polar residues. The helical transmembrane segment at 306 to 326 (GLGFCIIYLFFITSLIFPAIC) threads the bilayer. Residues 327–339 (TNIESLSKGSGSP) lie on the Extracellular side of the membrane. The helical transmembrane segment at 340–357 (WSTKFFVPLTTFLLYNFA) threads the bilayer. At 358 to 376 (DLCGRQVTAWIQVPGPRSK) the chain is on the cytoplasmic side. Residues 377–397 (ALPGLALLRTCFVPLFVFCNY) form a helical membrane-spanning segment. Over 398–414 (QPRGHLHTVLFQSDVYP) the chain is Extracellular. A helical membrane pass occupies residues 415–435 (VLFTSLLGLSNGYLSTLALIY). Over 436–453 (GPKIVPRELAEATGVVMT) the chain is Cytoplasmic. Residues 454–474 (FYMGLGLVLGSACSALLVHLI) form a helical membrane-spanning segment.

Belongs to the SLC29A/ENT transporter (TC 2.A.57) family.

It localises to the lysosome membrane. The protein localises to the late endosome membrane. Its subcellular location is the mitochondrion membrane. The protein resides in the cell membrane. It catalyses the reaction adenosine(in) = adenosine(out). The catalysed reaction is guanosine(in) = guanosine(out). The enzyme catalyses inosine(in) = inosine(out). It carries out the reaction uridine(out) = uridine(in). It catalyses the reaction cytidine(in) = cytidine(out). The catalysed reaction is thymidine(in) = thymidine(out). The enzyme catalyses 2'-deoxyadenosine(in) = 2'-deoxyadenosine(out). It carries out the reaction 2'-deoxycytidine(in) = 2'-deoxycytidine(out). It catalyses the reaction guanine(out) = guanine(in). The catalysed reaction is uracil(in) = uracil(out). The enzyme catalyses (R)-noradrenaline(out) = (R)-noradrenaline(in). It carries out the reaction dopamine(out) = dopamine(in). It catalyses the reaction serotonin(out) = serotonin(in). The catalysed reaction is tyramine(in) = tyramine(out). The enzyme catalyses ATP(in) = ATP(out). In terms of biological role, uniporter that mediates the facilitative transport of nucleoside across lysosomal and mitochondrial membranes. Functions as a non-electrogenic Na(+)-independent transporter. Substrate transport is pH-dependent and enhanced under acidic condition, probably reflecting the location of the transporter in acidic intracellular compartments. Proton is not a cotransporting ion but most likely change the ionization state of the transporter which dictates transport-permissible/impermissible conformation for nucleoside translocation. May direct the nucleoside transport from lysosomes to cytosol or cytosol to mitochondria to facilitate the fundamental function of salvage synthesis of nucleic acids. Involved in the transport of nucleosides (adenosine, guanosine, uridine, thymidine, cytidine and inosine) and deoxynucleosides (deoxyadenosine, deoxycytidine). Also mediates transport of purine nucleobases (adenine, guanine) and pyrimidine nucleobases (uracil). Also able to transport monoamine neurotransmitters dopamine, serotonin, noradrenaline and tyramine. Capable of transporting ATP. Mediates nucleoside export from lysosomes in macrophages, which regulates macrophage functions and numbers. The protein is Equilibrative nucleoside transporter 3 (SLC29A3) of Bos taurus (Bovine).